The sequence spans 452 residues: Histone acetyltransferase type B subunit 2 (452 aa).

6 WD repeats span residues 155 to 195, 205 to 245, 256 to 296, 300 to 340, 344 to 384, and 401 to 441; these read YEDG…NSKE, HHTK…SDGS, HHDA…NKAA, KESR…TPIS, SHCD…DDLS, and GHSS…SNDE.

Belongs to the WD repeat RBAP46/RBAP48/MSI1 family. In terms of assembly, component of the HAT-B complex composed of at least HAT1 and HAT2. The HAT-B complex binds to histone H4 tail.

Its subcellular location is the cytoplasm. The protein localises to the nucleus. Its function is as follows. Regulatory subunit of the histone acetylase B (HAT-B) complex. The complex acetylates 'Lys-12' of histone H4 which is required for telomeric silencing. In Yarrowia lipolytica (strain CLIB 122 / E 150) (Yeast), this protein is Histone acetyltransferase type B subunit 2 (HAT2).